Reading from the N-terminus, the 330-residue chain is Ribosomal RNA small subunit methyltransferase C (330 aa).

Belongs to the methyltransferase superfamily. RsmC family. Monomer.

The protein resides in the cytoplasm. The catalysed reaction is guanosine(1207) in 16S rRNA + S-adenosyl-L-methionine = N(2)-methylguanosine(1207) in 16S rRNA + S-adenosyl-L-homocysteine + H(+). Specifically methylates the guanine in position 1207 of 16S rRNA in the 30S particle. This chain is Ribosomal RNA small subunit methyltransferase C, found in Haemophilus influenzae (strain PittEE).